Reading from the N-terminus, the 172-residue chain is L-amino acid oxidase (172 aa).

44 to 47 (GPMR) provides a ligand contact to FAD. 2 residues coordinate substrate: Arg-47 and His-103.

This sequence belongs to the flavin monoamine oxidase family. FIG1 subfamily. Heterodimer; non-covalently linked. Requires FAD as cofactor. Post-translationally, N-glycosylated. In terms of tissue distribution, expressed by the venom gland.

Its subcellular location is the secreted. It carries out the reaction an L-alpha-amino acid + O2 + H2O = a 2-oxocarboxylate + H2O2 + NH4(+). The catalysed reaction is L-leucine + O2 + H2O = 4-methyl-2-oxopentanoate + H2O2 + NH4(+). The enzyme catalyses L-phenylalanine + O2 + H2O = 3-phenylpyruvate + H2O2 + NH4(+). It catalyses the reaction L-tryptophan + O2 + H2O = indole-3-pyruvate + H2O2 + NH4(+). It carries out the reaction L-methionine + O2 + H2O = 4-methylsulfanyl-2-oxobutanoate + H2O2 + NH4(+). The catalysed reaction is L-isoleucine + O2 + H2O = (S)-3-methyl-2-oxopentanoate + H2O2 + NH4(+). The enzyme catalyses L-arginine + O2 + H2O = 5-guanidino-2-oxopentanoate + H2O2 + NH4(+). It catalyses the reaction L-tyrosine + O2 + H2O = 3-(4-hydroxyphenyl)pyruvate + H2O2 + NH4(+). Activity is increased by Mn(2+) ions. Inhibited by Zn(2+), Ni(2+), Co(2+), Cu(2+) and Al(3+). No significant activity change by Na(+), K(+), Ca(2+), Mg(2+) and Ba(2+) ions. Both isoform are completely inhibited by L-Cys and reduced glutathione. O-phenanthroline, beta-mercaptoethanol and PMSF completely inhibit the enzymatic activity of LAAOII, but have no activity on LAAOI. Iodoacetic acid inhibits the enzymatic activity of LAAOII by 46% but has no effect on the LAAOI activity. Functionally, catalyzes an oxidative deamination of predominantly hydrophobic and aromatic L-amino acids, thus producing hydrogen peroxide that may contribute to the diverse toxic effects of this enzyme. Shows high specificity for L-Arg, L-Met, L-Phe, L-Leu, L-Tyr, L-Ile and L-Trp, low specificity for L-Val, L-Ala, L-Asn, L-Gln, and no specificity for L-Pro, L-Ser, L-Thr, L-Cys, L-Gly and L-Asp. Exhibits diverse biological activities, such as hemorrhage, hemolysis, edema, antibacterial and antiparasitic activities, as well as regulation of platelet aggregation. Its effect on platelets is controversial, since it either induces aggregation or inhibits agonist-induced aggregation. These different effects are probably due to different experimental conditions. This Cerastes cerastes (Horned desert viper) protein is L-amino acid oxidase.